The following is a 68-amino-acid chain: ADVVTYENKKGNVTFDHKAHAEKLGCDACHEGTPAKIAIDKKSAHKDACKTCHKSNNGPTKCGGCHIK.

Heme is bound by residues H17, H20, C26, C29, H30, H45, C49, C52, H53, C62, C65, and H66.

Post-translationally, binds 3 heme groups per subunit.

Functionally, participates in sulfate respiration coupled with phosphorylation by transferring electrons from the enzyme dehydrogenase to ferredoxin. This Desulfuromonas acetoxidans (Chloropseudomonas ethylica) protein is Cytochrome c3 (cyd).